A 126-amino-acid polypeptide reads, in one-letter code: Protein ApaG (126 aa).

The ApaG domain maps to 2 to 126 (SALDNSIRVE…FRLATPGLLH (125 aa)).

The polypeptide is Protein ApaG (Shewanella oneidensis (strain ATCC 700550 / JCM 31522 / CIP 106686 / LMG 19005 / NCIMB 14063 / MR-1)).